We begin with the raw amino-acid sequence, 348 residues long: DNA-directed RNA polymerase subunit alpha (348 aa).

The interval 1–243 (MLIKQGDRLI…DQISVFINFD (243 aa)) is alpha N-terminal domain (alpha-NTD). The alpha C-terminal domain (alpha-CTD) stretch occupies residues 260 to 348 (VNENLFKGID…WLKRKQQNEA (89 aa)).

The protein belongs to the RNA polymerase alpha chain family. Homodimer. The RNAP catalytic core consists of 2 alpha, 1 beta, 1 beta' and 1 omega subunit. When a sigma factor is associated with the core the holoenzyme is formed, which can initiate transcription.

The catalysed reaction is RNA(n) + a ribonucleoside 5'-triphosphate = RNA(n+1) + diphosphate. Its function is as follows. DNA-dependent RNA polymerase catalyzes the transcription of DNA into RNA using the four ribonucleoside triphosphates as substrates. The polypeptide is DNA-directed RNA polymerase subunit alpha (Oleidesulfovibrio alaskensis (strain ATCC BAA-1058 / DSM 17464 / G20) (Desulfovibrio alaskensis)).